The following is a 407-amino-acid chain: Multifunctional CCA protein (407 aa).

Positions 8 and 11 each coordinate ATP. Positions 8 and 11 each coordinate CTP. Aspartate 21 and aspartate 23 together coordinate Mg(2+). Arginine 91, arginine 137, and arginine 140 together coordinate ATP. Positions 91, 137, and 140 each coordinate CTP. The 102-residue stretch at 228–329 (TGVHALMALA…VALFDRVDAW (102 aa)) folds into the HD domain.

This sequence belongs to the tRNA nucleotidyltransferase/poly(A) polymerase family. Bacterial CCA-adding enzyme type 1 subfamily. In terms of assembly, monomer. Can also form homodimers and oligomers. Mg(2+) is required as a cofactor. Ni(2+) serves as cofactor.

It catalyses the reaction a tRNA precursor + 2 CTP + ATP = a tRNA with a 3' CCA end + 3 diphosphate. It carries out the reaction a tRNA with a 3' CCA end + 2 CTP + ATP = a tRNA with a 3' CCACCA end + 3 diphosphate. In terms of biological role, catalyzes the addition and repair of the essential 3'-terminal CCA sequence in tRNAs without using a nucleic acid template. Adds these three nucleotides in the order of C, C, and A to the tRNA nucleotide-73, using CTP and ATP as substrates and producing inorganic pyrophosphate. tRNA 3'-terminal CCA addition is required both for tRNA processing and repair. Also involved in tRNA surveillance by mediating tandem CCA addition to generate a CCACCA at the 3' terminus of unstable tRNAs. While stable tRNAs receive only 3'-terminal CCA, unstable tRNAs are marked with CCACCA and rapidly degraded. This chain is Multifunctional CCA protein, found in Erwinia tasmaniensis (strain DSM 17950 / CFBP 7177 / CIP 109463 / NCPPB 4357 / Et1/99).